The following is a 436-amino-acid chain: Putative permease MJ0326 (436 aa).

Transmembrane regions (helical) follow at residues 24 to 44 (LAGI…PQIL), 51 to 71 (FGAV…VMGL), 79 to 99 (LAPG…GMGI), 103 to 123 (VALG…LTKI), 139 to 159 (TAVG…GIIV), 171 to 191 (LMEP…ILVS), 194 to 214 (VIGA…ILGI), 235 to 255 (LDIM…FFFV), 322 to 342 (GFVS…YPVV), 345 to 365 (IPPY…MRSV), 381 to 401 (ITLL…LGFI), and 416 to 436 (VHWL…YLSG).

This sequence belongs to the nucleobase:cation symporter-2 (NCS2) (TC 2.A.40) family. Azg-like subfamily.

It is found in the cell membrane. The chain is Putative permease MJ0326 from Methanocaldococcus jannaschii (strain ATCC 43067 / DSM 2661 / JAL-1 / JCM 10045 / NBRC 100440) (Methanococcus jannaschii).